Consider the following 481-residue polypeptide: Trigger factor (481 aa).

Residues 161-298 enclose the PPIase FKBP-type domain; sequence GDQLTATVQT…VSEIQNRQLP (138 aa). The tract at residues 173–245 is disordered; that stretch reads DGVPLHKLDE…PTTLIMEERR (73 aa). Over residues 182-235 the composition is skewed to acidic residues; the sequence is EEDDDDDDDDDDDDDDDDDDDDDDDDDDDDDDDDDDDDDDDDDDDDDDDDDEGE.

This sequence belongs to the FKBP-type PPIase family. Tig subfamily.

Its subcellular location is the cytoplasm. The enzyme catalyses [protein]-peptidylproline (omega=180) = [protein]-peptidylproline (omega=0). Its function is as follows. Involved in protein export. Acts as a chaperone by maintaining the newly synthesized protein in an open conformation. Functions as a peptidyl-prolyl cis-trans isomerase. The chain is Trigger factor from Herpetosiphon aurantiacus (strain ATCC 23779 / DSM 785 / 114-95).